Reading from the N-terminus, the 170-residue chain is Small ribosomal subunit protein bS16 (170 aa).

The segment at 109–170 (ALAEAEGGPS…AAESEAPAAE (62 aa)) is disordered. Over residues 131 to 150 (AKKDEQPTEKAAEPAAEKAA) the composition is skewed to basic and acidic residues. Residues 151–170 (EPAAEAPAEAAAESEAPAAE) show a composition bias toward low complexity.

This sequence belongs to the bacterial ribosomal protein bS16 family.

This chain is Small ribosomal subunit protein bS16, found in Mycolicibacterium gilvum (strain PYR-GCK) (Mycobacterium gilvum (strain PYR-GCK)).